A 211-amino-acid polypeptide reads, in one-letter code: Ubiquitin-conjugating enzyme E2 S (211 aa).

Residues 11-157 (HVIRQVYKEV…ARLMTEIHAH (147 aa)) enclose the UBC core domain. Cys-95 serves as the catalytic Glycyl thioester intermediate. Residues 157–167 (HSSSLRGKDPT) are compositionally biased toward basic and acidic residues. The tract at residues 157–211 (HSSSLRGKDPTDPCSSASVTGALGDGPMAKKHAGDRDKKLAAKKKTDKKRALRRL) is disordered. A compositionally biased stretch (basic residues) spans 197-211 (AAKKKTDKKRALRRL).

It belongs to the ubiquitin-conjugating enzyme family.

The catalysed reaction is S-ubiquitinyl-[E1 ubiquitin-activating enzyme]-L-cysteine + [E2 ubiquitin-conjugating enzyme]-L-cysteine = [E1 ubiquitin-activating enzyme]-L-cysteine + S-ubiquitinyl-[E2 ubiquitin-conjugating enzyme]-L-cysteine.. It functions in the pathway protein modification; protein ubiquitination. Catalyzes the covalent attachment of ubiquitin to other proteins. Acts as an essential factor of the anaphase promoting complex/cyclosome (APC/C), a cell cycle-regulated ubiquitin ligase that controls progression through mitosis. Acts by specifically elongating 'Lys-11'-linked polyubiquitin chains initiated by the E2 enzyme ube2c/ubch10 on APC/C substrates, enhancing the degradation of APC/C substrates by the proteasome and promoting mitotic exit. The sequence is that of Ubiquitin-conjugating enzyme E2 S (ube2s) from Aquarana catesbeiana (American bullfrog).